The following is a 1507-amino-acid chain: DNA-directed RNA polymerase subunit beta' (1507 aa).

Zn(2+)-binding residues include cysteine 71, cysteine 73, cysteine 86, and cysteine 89. Aspartate 470, aspartate 472, and aspartate 474 together coordinate Mg(2+). Residues cysteine 800, cysteine 874, cysteine 881, and cysteine 884 each contribute to the Zn(2+) site.

The protein belongs to the RNA polymerase beta' chain family. The RNAP catalytic core consists of 2 alpha, 1 beta, 1 beta' and 1 omega subunit. When a sigma factor is associated with the core the holoenzyme is formed, which can initiate transcription. Mg(2+) serves as cofactor. Requires Zn(2+) as cofactor.

It carries out the reaction RNA(n) + a ribonucleoside 5'-triphosphate = RNA(n+1) + diphosphate. Functionally, DNA-dependent RNA polymerase catalyzes the transcription of DNA into RNA using the four ribonucleoside triphosphates as substrates. This Nitratiruptor sp. (strain SB155-2) protein is DNA-directed RNA polymerase subunit beta'.